A 364-amino-acid polypeptide reads, in one-letter code: Chorismate synthase (364 aa).

R48 is a binding site for NADP(+). FMN-binding positions include 126–128 (RSS), G288, 303–307 (KPIAS), and R329.

It belongs to the chorismate synthase family. In terms of assembly, homotetramer. It depends on FMNH2 as a cofactor.

The catalysed reaction is 5-O-(1-carboxyvinyl)-3-phosphoshikimate = chorismate + phosphate. Its pathway is metabolic intermediate biosynthesis; chorismate biosynthesis; chorismate from D-erythrose 4-phosphate and phosphoenolpyruvate: step 7/7. Functionally, catalyzes the anti-1,4-elimination of the C-3 phosphate and the C-6 proR hydrogen from 5-enolpyruvylshikimate-3-phosphate (EPSP) to yield chorismate, which is the branch point compound that serves as the starting substrate for the three terminal pathways of aromatic amino acid biosynthesis. This reaction introduces a second double bond into the aromatic ring system. This chain is Chorismate synthase, found in Desulfovibrio desulfuricans (strain ATCC 27774 / DSM 6949 / MB).